The chain runs to 587 residues: MFRSHTCGELRLSDAGKSVTLAGWVQRARKMGGMTFVDLRDRYGITQLVFNEAVNAELCERANHLGREFVIQITGEVNERSNKNMNIPTGEIEIIVSVLNVLNSAVTPPFTIEDNSDGGDDIRMKFRYLDLRRNCVRKNLELRHKMTMEVRRYLDSKGFLEVETPMLVGSTPEGARDFVVPSRMNPGQFYALPQSPQTLKQLLMVSGFDRYFQIVKCFRDEDLRADRQPEFTQIDCEMSFVEQEDIISTFEGMAKHLFKELRGVELSEPFLRMTWADAIKYYGSDKPDLRFGMKFVELMDIMKGHGFSVFDDAAYIGGICAEGAASYTRKQLDQLTEFVKKPQIGAKGMVYARVEADGNVKSSVDKFYSQEVLQQMKEAFSAKPGDLILILSGPDAMKTRKQLCELRLEVGRQLGLRDKNKFACLWVVDFPMFEWSEEEGRLMAMHHPFTHPKEEDIPLLDTDPAAVRADAYDMVVNGVEVGGGSIRIHDSQLQAKMFEILGFTPERAQEQFGFLMNAFKYGAPPHGGLAYGLDRWVSLFAGLDSIRDCIAFPKNNSGRDVMLDAPAALDQSQLDELNLVVDIKEDK.

E173 is an L-aspartate binding site. Residues 197–200 (QTLK) are aspartate. R219 is a binding site for L-aspartate. ATP is bound by residues 219–221 (RDE) and Q228. Position 446 (H446) interacts with L-aspartate. Position 480 (E480) interacts with ATP. R487 lines the L-aspartate pocket. Residue 532-535 (GLDR) participates in ATP binding.

It belongs to the class-II aminoacyl-tRNA synthetase family. Type 1 subfamily. In terms of assembly, homodimer.

It localises to the cytoplasm. It catalyses the reaction tRNA(Asp) + L-aspartate + ATP = L-aspartyl-tRNA(Asp) + AMP + diphosphate. Its function is as follows. Catalyzes the attachment of L-aspartate to tRNA(Asp) in a two-step reaction: L-aspartate is first activated by ATP to form Asp-AMP and then transferred to the acceptor end of tRNA(Asp). The chain is Aspartate--tRNA ligase from Phocaeicola vulgatus (strain ATCC 8482 / DSM 1447 / JCM 5826 / CCUG 4940 / NBRC 14291 / NCTC 11154) (Bacteroides vulgatus).